A 117-amino-acid polypeptide reads, in one-letter code: Ig heavy chain V region 5-84 (117 aa).

The N-terminal stretch at 1 to 19 (MNFGLSLIFLVLVLKGVLC) is a signal peptide. The framework-1 stretch occupies residues 20–49 (EVKLVESGGGLVQPGGSLKLSCAASGFTFS). The cysteines at positions 41 and 115 are disulfide-linked. Positions 50-54 (SYTMS) are complementarity-determining-1. The segment at 55–68 (WVRQTPEKRLEWVA) is framework-2. Residues 69–85 (YISNGGGSTYYPDTVKG) are complementarity-determining-2. Positions 86-117 (RFTISRDNAKNNLYLQMSSLKSEDTAMYYCAR) are framework-3.

In Mus musculus (Mouse), this protein is Ig heavy chain V region 5-84.